The chain runs to 284 residues: Thymidylate synthase (284 aa).

Arginine 34 serves as a coordination point for dUMP. Histidine 64 serves as a coordination point for (6R)-5,10-methylene-5,6,7,8-tetrahydrofolate. DUMP is bound at residue arginine 139–arginine 140. Cysteine 159 functions as the Nucleophile in the catalytic mechanism. DUMP is bound by residues arginine 186 to aspartate 189, asparagine 197, and histidine 227 to tyrosine 229. (6R)-5,10-methylene-5,6,7,8-tetrahydrofolate is bound at residue aspartate 189. Alanine 283 is a binding site for (6R)-5,10-methylene-5,6,7,8-tetrahydrofolate.

Belongs to the thymidylate synthase family. Bacterial-type ThyA subfamily. In terms of assembly, homodimer.

It is found in the cytoplasm. The enzyme catalyses dUMP + (6R)-5,10-methylene-5,6,7,8-tetrahydrofolate = 7,8-dihydrofolate + dTMP. It participates in pyrimidine metabolism; dTTP biosynthesis. Its function is as follows. Catalyzes the reductive methylation of 2'-deoxyuridine-5'-monophosphate (dUMP) to 2'-deoxythymidine-5'-monophosphate (dTMP) while utilizing 5,10-methylenetetrahydrofolate (mTHF) as the methyl donor and reductant in the reaction, yielding dihydrofolate (DHF) as a by-product. This enzymatic reaction provides an intracellular de novo source of dTMP, an essential precursor for DNA biosynthesis. The protein is Thymidylate synthase of Polaromonas sp. (strain JS666 / ATCC BAA-500).